We begin with the raw amino-acid sequence, 324 residues long: Archaeosine synthase subunit beta (324 aa).

Residues 12-254 (GKPGTALFII…LIWAKRKFPN (243 aa)) enclose the Radical SAM core domain. C27, C36, and C39 together coordinate [4Fe-4S] cluster.

The protein belongs to the radical SAM superfamily. RaSEA family. In terms of assembly, forms a robust complex with the archaeosine synthase alpha subunit ArcS, likely an alpha(2)beta(2) heterotetrameric structure. The cofactor is [4Fe-4S] cluster.

It carries out the reaction 7-N-[(5S)-5-amino-5-carboxypentyl]formamidino-7-deazaguanosine(15) in tRNA + S-adenosyl-L-methionine = archaeosine(15) in tRNA + L-1-piperideine-6-carboxylate + 5'-deoxyadenosine + L-methionine + 2 H(+). The protein operates within tRNA modification; archaeosine-tRNA biosynthesis. Functionally, radical SAM enzyme involved in the synthesis of archaeosine, a modified nucleoside present in the dihydrouridine loop (D-loop) of archaeal tRNAs. Catalyzes the cleavage of the C(epsilon)-N bond of the lysine moiety of q0kN15-tRNA, leading to the formation of archaeosine at position 15 in tRNAs. The polypeptide is Archaeosine synthase subunit beta (Thermococcus kodakarensis (strain ATCC BAA-918 / JCM 12380 / KOD1) (Pyrococcus kodakaraensis (strain KOD1))).